A 1330-amino-acid chain; its full sequence is pre-mRNA 3' end processing protein WDR33 (1330 aa).

Residue A2 is modified to N-acetylalanine. S7 carries the post-translational modification Phosphoserine. N6-acetyllysine is present on K46. WD repeat units lie at residues 117-156 (KVKCPVFVVRWTPEGRRLVTGASSGEFTLWNGLTFNFETI), 159-198 (AHDSPVRAMTWSHNDMWMLTADHGGYVKYWQSNMNNVKMF), 200-239 (AHKEAIREASFSPTDNKFATCSDDGTVRIWDFLRCHEERI), 242-283 (GHGA…SLAT), 286-325 (AHKNTVMEVKLNLNGNWLLTASRDHLCKLFDIRNLKEELQ), 329-369 (GHKK…EVGG), and 373-412 (AHEGMIWSLAWHPLGHILCSGSNDHTSKFWTRNRPGDKMR). Glycyl lysine isopeptide (Lys-Gly) (interchain with G-Cter in SUMO2) cross-links involve residues K526, K530, and K560. Residues 566–1330 (QKQADQIQPP…GTSRGSGRGR (765 aa)) form a disordered region. Polar residues predominate over residues 588–607 (FSGQGPISQIPQGFQQPHPS). The region spanning 617 to 769 (GPPGPQGQFR…GPASQGIQGP (153 aa)) is the Collagen-like domain. Residues 622–642 (QGQFRAPGPQGQMGPQGPPMH) show a composition bias toward low complexity. Residues 682 to 694 (PHGPLGPQGPPGP) are compositionally biased toward pro residues. 2 stretches are compositionally biased toward low complexity: residues 695–706 (QGSSGPQGHMGP) and 725–750 (QGHMGPQGPPGTQGMQGPPGPRGMQG). R776 bears the Omega-N-methylarginine mark. A compositionally biased stretch (low complexity) spans 848–863 (GPSGSQGQQGPPQGSL). R909 carries the asymmetric dimethylarginine modification. A compositionally biased stretch (low complexity) spans 926–935 (PGLGQQGAQG). Basic and acidic residues-rich tracts occupy residues 965 to 983 (SERRHEQSGGPEHGPDRGP) and 992 to 1027 (GPPDRRGSHPDFPDDFRPDDFHPDKRFGHRLREFEG). Omega-N-methylarginine is present on R981. Residue R1028 is modified to Omega-N-methylarginine. Basic and acidic residues-rich tracts occupy residues 1049 to 1061 (PDHREFNEGDGRG) and 1071 to 1115 (EGRR…RGRD). Acidic residues predominate over residues 1123–1133 (FGPEEGFDASD). Composition is skewed to basic and acidic residues over residues 1134–1143 (EAARGRDLRG), 1163–1211 (EFPR…RERS), and 1236–1253 (SEHREMEAQGGPSEDRGS). S1204 is subject to Phosphoserine. At R1256 the chain carries Omega-N-methylarginine. Residues 1275–1287 (DGDHHDGYHRDEP) show a composition bias toward basic and acidic residues. Positions 1293–1323 (GSSSSSRGARSGSNWGRGSNMNSGPPRRGTS) are enriched in low complexity. At R1309 the chain carries Asymmetric dimethylarginine; alternate. An Omega-N-methylarginine; alternate modification is found at R1309.

It belongs to the WD repeat WDR33 family. In terms of assembly, component of the cleavage and polyadenylation specificity factor (CPSF) module of the pre-mRNA 3'-end processing complex. Interacts with CPSF3/CPSF73. In terms of tissue distribution, most highly expressed in testis.

It is found in the nucleus. Essential for both cleavage and polyadenylation of pre-mRNA 3' ends. This chain is pre-mRNA 3' end processing protein WDR33 (Wdr33), found in Mus musculus (Mouse).